The primary structure comprises 257 residues: Aspartate/glutamate leucyltransferase (257 aa).

This sequence belongs to the R-transferase family. Bpt subfamily.

It is found in the cytoplasm. The catalysed reaction is N-terminal L-glutamyl-[protein] + L-leucyl-tRNA(Leu) = N-terminal L-leucyl-L-glutamyl-[protein] + tRNA(Leu) + H(+). The enzyme catalyses N-terminal L-aspartyl-[protein] + L-leucyl-tRNA(Leu) = N-terminal L-leucyl-L-aspartyl-[protein] + tRNA(Leu) + H(+). Its function is as follows. Functions in the N-end rule pathway of protein degradation where it conjugates Leu from its aminoacyl-tRNA to the N-termini of proteins containing an N-terminal aspartate or glutamate. This is Aspartate/glutamate leucyltransferase from Leptospira interrogans serogroup Icterohaemorrhagiae serovar copenhageni (strain Fiocruz L1-130).